The primary structure comprises 754 residues: Glutathione biosynthesis bifunctional protein GshAB (754 aa).

A glutamate--cysteine ligase region spans residues 1–332 (MTLNQLLQKL…QGHALNEKIA (332 aa)). The 259-residue stretch at 488–746 (KKILADASFP…ITTKILDKLF (259 aa)) folds into the ATP-grasp domain. 515–573 (PLIKDKQIVVKPKSTNFGLGISIFQEPASLDNYQKALEIAFAEDTSVLVEEFIPGTEYR) serves as a coordination point for ATP. Residues D695, E716, and N718 each contribute to the Mg(2+) site. D695, E716, and N718 together coordinate Mn(2+).

The protein in the N-terminal section; belongs to the glutamate--cysteine ligase type 1 family. Type 2 subfamily. In terms of assembly, monomer. It depends on Mg(2+) as a cofactor. Mn(2+) serves as cofactor.

It catalyses the reaction L-cysteine + L-glutamate + ATP = gamma-L-glutamyl-L-cysteine + ADP + phosphate + H(+). The catalysed reaction is gamma-L-glutamyl-L-cysteine + glycine + ATP = glutathione + ADP + phosphate + H(+). It participates in sulfur metabolism; glutathione biosynthesis; glutathione from L-cysteine and L-glutamate: step 1/2. The protein operates within sulfur metabolism; glutathione biosynthesis; glutathione from L-cysteine and L-glutamate: step 2/2. Synthesizes glutathione from L-glutamate and L-cysteine via gamma-L-glutamyl-L-cysteine. The chain is Glutathione biosynthesis bifunctional protein GshAB from Streptococcus thermophilus (strain ATCC BAA-250 / LMG 18311).